Here is a 188-residue protein sequence, read N- to C-terminus: Type II secretion system protein H (188 aa).

Positions 1–10 are cleaved as a propeptide — leader sequence; sequence MKRSTRKQQG. The residue at position 11 (F11) is an N-methylphenylalanine. A helical transmembrane segment spans residues 13–35; that stretch reads LLEMMLVVLLAGIAAGMVVMAFP.

The protein belongs to the GSP H family. Type II secretion is composed of four main components: the outer membrane complex, the inner membrane complex, the cytoplasmic secretion ATPase and the periplasm-spanning pseudopilus. Interacts with core component OutG. In terms of processing, cleaved by prepilin peptidase. Post-translationally, methylated by prepilin peptidase at the amino group of the N-terminal phenylalanine once the leader sequence is cleaved by prepilin peptidase.

The protein localises to the cell inner membrane. Component of the type II secretion system required for the energy-dependent secretion of extracellular factors such as proteases and toxins from the periplasm. Part of the pseudopilus tip complex that is critical for the recognition and binding of secretion substrates. The protein is Type II secretion system protein H (outH) of Pectobacterium carotovorum subsp. carotovorum (Erwinia carotovora subsp. carotovora).